Here is a 350-residue protein sequence, read N- to C-terminus: Ion-translocating oxidoreductase complex subunit D (350 aa).

3 helical membrane-spanning segments follow: residues 36 to 56, 89 to 109, and 124 to 144; these read CYFFGWGTLIQIALAIAIAVA, IPALAPWWIAAIGVIFAILVV, and AMAAYVMLLISFPMQMTTWVA. Threonine 185 is subject to FMN phosphoryl threonine. 5 consecutive transmembrane segments (helical) span residues 212–232, 239–259, 265–285, 298–318, and 319–339; these read GFGIGWALINLAYLAGGLVML, WQISTAILASLFVCASIGYLL, MGPLLHLFSGATMLAAFFIAT, LIFGSLIGLLVYLIRSFCGYP, and DAFAFAVLLANLCAPFIDYYV.

Belongs to the NqrB/RnfD family. In terms of assembly, the complex is composed of six subunits: RnfA, RnfB, RnfC, RnfD, RnfE and RnfG. It depends on FMN as a cofactor.

It is found in the cell inner membrane. Functionally, part of a membrane-bound complex that couples electron transfer with translocation of ions across the membrane. In Shewanella loihica (strain ATCC BAA-1088 / PV-4), this protein is Ion-translocating oxidoreductase complex subunit D.